We begin with the raw amino-acid sequence, 378 residues long: Anhydro-N-acetylmuramic acid kinase (378 aa).

9 to 16 serves as a coordination point for ATP; it reads GTSADGID.

This sequence belongs to the anhydro-N-acetylmuramic acid kinase family.

It catalyses the reaction 1,6-anhydro-N-acetyl-beta-muramate + ATP + H2O = N-acetyl-D-muramate 6-phosphate + ADP + H(+). It participates in amino-sugar metabolism; 1,6-anhydro-N-acetylmuramate degradation. The protein operates within cell wall biogenesis; peptidoglycan recycling. Functionally, catalyzes the specific phosphorylation of 1,6-anhydro-N-acetylmuramic acid (anhMurNAc) with the simultaneous cleavage of the 1,6-anhydro ring, generating MurNAc-6-P. Is required for the utilization of anhMurNAc either imported from the medium or derived from its own cell wall murein, and thus plays a role in cell wall recycling. This is Anhydro-N-acetylmuramic acid kinase from Synechococcus elongatus (strain ATCC 33912 / PCC 7942 / FACHB-805) (Anacystis nidulans R2).